A 268-amino-acid chain; its full sequence is MNTTTEQDFGADPTKVRDTDHYTEEYVDGFVDKWDDLIDWDSRAKSEGDFFIQELKKRGATRILDAATGTGFHSVRLLEAGFDVVSADGSAEMLAKAFENGRKRGHILRTVQVDWRWLNRDIHGRYDAIICLGNSFTHLFNEKDRRKTLAEFYSALNPEGVLILDQRNYDGILDHGYDSSHSYYYCGEGVSVYPEHVDDGLARFKYEFNDGSTYFLNMFPLRKDYTRRLMHEVGFQKIDTYGDFKATYRDADPDFFIHVAEKEYREED.

S-adenosyl-L-methionine-binding positions include Y26, W34, R43, A67, D88, D114 to W115, and L132. Substrate-binding residues include N134, R167, and Y206.

This sequence belongs to the class I-like SAM-binding methyltransferase superfamily. Glycine N-methyltransferase family. In terms of assembly, monomer.

It catalyses the reaction glycine + 2 S-adenosyl-L-methionine = N,N-dimethylglycine + 2 S-adenosyl-L-homocysteine + 2 H(+). The enzyme catalyses glycine + S-adenosyl-L-methionine = sarcosine + S-adenosyl-L-homocysteine + H(+). It carries out the reaction sarcosine + S-adenosyl-L-methionine = N,N-dimethylglycine + S-adenosyl-L-homocysteine + H(+). Its pathway is amine and polyamine biosynthesis; betaine biosynthesis via glycine pathway; betaine from glycine: step 1/3. It functions in the pathway amine and polyamine biosynthesis; betaine biosynthesis via glycine pathway; betaine from glycine: step 2/3. P-chloromercuribenzoic acid inhibits more than 95% of the GSMT activities on glycine and sarcosine, and S-adenosylhomocysteine (AdoHcy) inhibits completely GSMT activities. In terms of biological role, catalyzes the methylation of glycine and sarcosine to sarcosine and dimethylglycine, respectively, with S-adenosylmethionine (AdoMet) acting as the methyl donor. It has strict specificity for glycine and sarcosine as the methyl group acceptors. In Halorhodospira halochloris (Ectothiorhodospira halochloris), this protein is Glycine/sarcosine N-methyltransferase.